The primary structure comprises 124 residues: Small ribosomal subunit protein uS13 (124 aa).

The disordered stretch occupies residues 95-124 (GLPVRGQRTKTNARTRKGPKRTIAGKKKAR).

Belongs to the universal ribosomal protein uS13 family. In terms of assembly, part of the 30S ribosomal subunit. Forms a loose heterodimer with protein S19. Forms two bridges to the 50S subunit in the 70S ribosome.

Functionally, located at the top of the head of the 30S subunit, it contacts several helices of the 16S rRNA. In the 70S ribosome it contacts the 23S rRNA (bridge B1a) and protein L5 of the 50S subunit (bridge B1b), connecting the 2 subunits; these bridges are implicated in subunit movement. Contacts the tRNAs in the A and P-sites. The polypeptide is Small ribosomal subunit protein uS13 (Mycobacterium sp. (strain JLS)).